We begin with the raw amino-acid sequence, 133 residues long: L-cystatin (133 aa).

The first 19 residues, 1–19 (MEGYNILAVLIILVGVSMG), serve as a signal peptide directing secretion. Position 20 is a pyrrolidone carboxylic acid (Gln-20). The short motif at 67 to 71 (QVVSG) is the Secondary area of contact element. 2 disulfide bridges follow: Cys-85-Cys-98 and Cys-109-Cys-129.

The protein belongs to the cystatin family. As to expression, expressed in hemocytes and slightly in heart.

It is found in the cytoplasmic granule. In terms of biological role, tight-binding inhibitor for papain. It has an important role in the protection of cells, antimicrobial activity against Gram-negative bacteria, defense against invading microbes, and response to external stimuli. This Tachypleus tridentatus (Japanese horseshoe crab) protein is L-cystatin.